A 421-amino-acid polypeptide reads, in one-letter code: Aspartokinase (421 aa).

Position 7–10 (7–10) interacts with ATP; that stretch reads KYGG. 25–30 is a binding site for substrate; that stretch reads RIVATK. Ser-41 is a binding site for ATP. Residues 45 to 49, Glu-74, 125 to 126, 151 to 154, and Ser-154 each bind substrate; these read DTTDE, LD, and RGGS. ATP-binding positions include 174–175, 180–185, and Lys-210; these read SD and YTADPR. 2 ACT domains span residues 267–343 and 349–421; these read VTVL…YDDQ and LVGA…GTGR. Residues Asp-274, 274–279, 292–294, Gln-298, 360–361, 374–375, and 381–382 contribute to the substrate site; these read DKPGEA, NID, VT, NI, and SE.

Belongs to the aspartokinase family. Tetramer consisting of 2 isoforms Alpha (catalytic and regulation) and of a homodimer of 2 isoforms Beta (regulation). The dimerization of the beta isoforms is stabilized by the bonding of threonine.

The enzyme catalyses L-aspartate + ATP = 4-phospho-L-aspartate + ADP. It functions in the pathway amino-acid biosynthesis; L-lysine biosynthesis via DAP pathway; (S)-tetrahydrodipicolinate from L-aspartate: step 1/4. The protein operates within amino-acid biosynthesis; L-methionine biosynthesis via de novo pathway; L-homoserine from L-aspartate: step 1/3. Its pathway is amino-acid biosynthesis; L-threonine biosynthesis; L-threonine from L-aspartate: step 1/5. Its activity is regulated as follows. Feedback inhibition by lysine and threonine, but he enzyme is moderately inhibited by lysine alone, and threonine alone has no effect. Functionally, catalyzes the phosphorylation of the beta-carboxyl group of aspartic acid with ATP to yield 4-phospho-L-aspartate, which is involved in the branched biosynthetic pathway leading to the biosynthesis of amino acids lysine, threonine, isoleucine and methionine. In Corynebacterium glutamicum (strain ATCC 13032 / DSM 20300 / JCM 1318 / BCRC 11384 / CCUG 27702 / LMG 3730 / NBRC 12168 / NCIMB 10025 / NRRL B-2784 / 534), this protein is Aspartokinase (lysC).